Consider the following 194-residue polypeptide: Nucleoside triphosphate pyrophosphatase (194 aa).

Asp-71 serves as the catalytic Proton acceptor.

The protein belongs to the Maf family. A divalent metal cation serves as cofactor.

Its subcellular location is the cytoplasm. The enzyme catalyses a ribonucleoside 5'-triphosphate + H2O = a ribonucleoside 5'-phosphate + diphosphate + H(+). The catalysed reaction is a 2'-deoxyribonucleoside 5'-triphosphate + H2O = a 2'-deoxyribonucleoside 5'-phosphate + diphosphate + H(+). In terms of biological role, nucleoside triphosphate pyrophosphatase. May have a dual role in cell division arrest and in preventing the incorporation of modified nucleotides into cellular nucleic acids. In Paramagnetospirillum magneticum (strain ATCC 700264 / AMB-1) (Magnetospirillum magneticum), this protein is Nucleoside triphosphate pyrophosphatase.